Here is a 493-residue protein sequence, read N- to C-terminus: Glutamate--tRNA ligase (493 aa).

Positions 10 to 20 (PSPTGDPHVGT) match the 'HIGH' region motif. A 'KMSKS' region motif is present at residues 251 to 255 (KLSKR). Lysine 254 is a binding site for ATP.

This sequence belongs to the class-I aminoacyl-tRNA synthetase family. Glutamate--tRNA ligase type 1 subfamily. As to quaternary structure, monomer.

The protein resides in the cytoplasm. It carries out the reaction tRNA(Glu) + L-glutamate + ATP = L-glutamyl-tRNA(Glu) + AMP + diphosphate. In terms of biological role, catalyzes the attachment of glutamate to tRNA(Glu) in a two-step reaction: glutamate is first activated by ATP to form Glu-AMP and then transferred to the acceptor end of tRNA(Glu). This is Glutamate--tRNA ligase from Pseudomonas putida (strain ATCC 700007 / DSM 6899 / JCM 31910 / BCRC 17059 / LMG 24140 / F1).